Here is a 329-residue protein sequence, read N- to C-terminus: Capsular polysaccharide phosphotransferase WcwK (329 aa).

This sequence belongs to the stealth family.

The chain is Capsular polysaccharide phosphotransferase WcwK (wcwK) from Streptococcus pneumoniae.